Consider the following 244-residue polypeptide: MAPEPSLTYLSQASSCNGATDNRKLVILDLNGTLLCRALAVRSEKSVYEASRNPIPRPGLHNFLKYIFANFSVMVFSSSKPHNVQAMLSAIMNEEQKKALIACWTRVDMKLTKHQFDRKVQTYKNLDTVWEKIHHDSTGKPVSWSQYNTIIVDDSKTKCAAHPYNHIAVSDFVAKSHSNIPKDIELACVIRYLKHLKSVPNVSYYIYKFPFKILADKSLEDNLKYLDELDENYKKECQVDNPQP.

Positions 19–196 (ATDNRKLVIL…ACVIRYLKHL (178 aa)) constitute an FCP1 homology domain.

This is an uncharacterized protein from Schizosaccharomyces pombe (strain 972 / ATCC 24843) (Fission yeast).